Here is a 731-residue protein sequence, read N- to C-terminus: DNA topoisomerase 1 (731 aa).

In terms of domain architecture, Toprim spans 17-130 (KHLVIVESPA…KRIVFNEITP (114 aa)). Glutamate 23 and aspartate 96 together coordinate Mg(2+). A Topo IA-type catalytic domain is found at 144–569 (DTAKVNAQKA…DFYPAFSEKV (426 aa)). The interval 178–183 (SAGRVQ) is interaction with DNA. Residue tyrosine 312 is the O-(5'-phospho-DNA)-tyrosine intermediate of the active site. 3 consecutive C4-type zinc fingers follow at residues 591-617 (CSQCGDTMVKKLGRFGFFLACGKFPEC), 628-657 (CPRPACDGNIVGKKTRGRKEFYGCTRFPVC), and 670-696 (CPQCRCFLVEKSNRRVGTYTACVNPEC).

This sequence belongs to the type IA topoisomerase family. Monomer. Requires Mg(2+) as cofactor.

It catalyses the reaction ATP-independent breakage of single-stranded DNA, followed by passage and rejoining.. Functionally, releases the supercoiling and torsional tension of DNA, which is introduced during the DNA replication and transcription, by transiently cleaving and rejoining one strand of the DNA duplex. Introduces a single-strand break via transesterification at a target site in duplex DNA. The scissile phosphodiester is attacked by the catalytic tyrosine of the enzyme, resulting in the formation of a DNA-(5'-phosphotyrosyl)-enzyme intermediate and the expulsion of a 3'-OH DNA strand. The free DNA strand then undergoes passage around the unbroken strand, thus removing DNA supercoils. Finally, in the religation step, the DNA 3'-OH attacks the covalent intermediate to expel the active-site tyrosine and restore the DNA phosphodiester backbone. The protein is DNA topoisomerase 1 of Treponema pallidum (strain Nichols).